The chain runs to 2006 residues: Supporter of activation of yellow protein (2006 aa).

8 disordered regions span residues 1 to 208, 313 to 347, 458 to 564, 744 to 794, 821 to 916, 929 to 1029, 1044 to 1082, and 1099 to 1196; these read MNDL…RRVE, MPAK…SSLA, EEKP…AQSQ, DTQD…DPAR, DLEG…KSRR, VSVG…NNNS, CSSS…SDPL, and QQLR…SAVA. Low complexity predominate over residues 10-60; the sequence is VAATSSSGSESGTAVESAAATSTAGSAGAAGRPQSNCSANSNAKSVAASST. A compositionally biased stretch (polar residues) spans 67–81; sequence VSSTSSPAQRDQQLN. Pro residues predominate over residues 118–128; the sequence is SPPPTLPPPTT. Low complexity predominate over residues 129–168; that stretch reads PCDDAPSTTGASASASSASGEAPSAASAAGAAGGPMAATA. The span at 189 to 199 shows a compositional bias: polar residues; that stretch reads ANPNSNANESQ. The span at 321–347 shows a compositional bias: low complexity; that stretch reads LSSLSPASASSSSASSSSSSSSSSSLA. The span at 485 to 494 shows a compositional bias: polar residues; the sequence is GGESNSSSQE. Positions 525–534 are enriched in basic and acidic residues; it reads SLSKEHDPKI. Residues 543-563 show a composition bias toward low complexity; it reads ASNGIASGGSKASKASKSAQS. Residues 744 to 758 are compositionally biased toward basic and acidic residues; that stretch reads DTQDNNNENHLKRTN. Composition is skewed to polar residues over residues 759–769 and 828–844; these read SEGNESPSSRL and PPTQ…NGAL. Over residues 861–870 the composition is skewed to pro residues; sequence PATPQPPPVA. Composition is skewed to basic and acidic residues over residues 936 to 945 and 963 to 972; these read ADMKAKEKES and ESPKTRDHRP. Composition is skewed to low complexity over residues 978–990 and 1018–1029; these read RTTT…LQPT and SSESESNNNNNS. Residues 1053–1080 show a composition bias toward polar residues; that stretch reads GAAANQQVIGGSGSSSMLPPTTILSSSD. Residues 1103–1112 show a composition bias toward low complexity; sequence SSRPSSISCG. Over residues 1147–1158 the composition is skewed to basic residues; the sequence is GRGRGRRSRGGR. Positions 1161 to 1173 are enriched in low complexity; the sequence is GSSSVDRAVSVGG. Residues 1340-1573 form an SAY region; the sequence is MIQEQVALYL…PPTDLMAQLL (234 aa). The segment at 1579–1685 is disordered; the sequence is AVGSDEIKTS…AGSEDEDGNE (107 aa). Low complexity-rich tracts occupy residues 1627–1652 and 1660–1677; these read TASS…SSDT and FSST…SGAG. The PHD-type 1; degenerate zinc-finger motif lies at 1694 to 1751; sequence TCGVCLRSQHRNARDMPEAFIRCYTCRKRVHPSCVDMPPRMVGRVRNYNWQCAGCKCC. A PHD-type 2; degenerate zinc finger spans residues 1753 to 1796; the sequence is KCRSSQRPGKMLYCEQCDRGYHIYCLGLRTVPDGRWSCERCCFC. The tract at residues 1887–1911 is disordered; sequence TSAQTDDSPMPSPGLTTNGGRALSP.

This sequence belongs to the SAYP family. In terms of tissue distribution, widely expressed. Highly expressed in ovary. Expressed in nursing cells and growing oocytes at all stages of development and accumulates in mature oocytes. Expressed in the nuclei of syncytium blastoderm of early embryos and in the nuclei of different tissues of late embryos, larvae, and adults.

The protein resides in the nucleus. It is found in the cytoplasm. The protein localises to the chromosome. Essential transcription regulator during early development. Coactivates transcription of some euchromatin genes and repress transcription in of euchromatin genes translocated to heterochromatin. The chain is Supporter of activation of yellow protein (e(y)3) from Drosophila melanogaster (Fruit fly).